The chain runs to 326 residues: Meso-diaminopimelate D-dehydrogenase (326 aa).

Residues 11-14, 35-37, 69-72, 92-94, and 121-125 contribute to the NADP(+) site; these read YGNL, TRR, CGGS, SFD, and VGWDP. Substrate is bound by residues D94, D124, W148, 154–155, T173, R199, H249, and N276; that span reads QG.

This sequence belongs to the diaminopimelate dehydrogenase family. Homodimer.

The catalysed reaction is meso-2,6-diaminopimelate + NADP(+) + H2O = (S)-2-amino-6-oxoheptanedioate + NH4(+) + NADPH + H(+). It functions in the pathway amino-acid biosynthesis; L-lysine biosynthesis via DAP pathway; DL-2,6-diaminopimelate from (S)-tetrahydrodipicolinate: step 1/1. With respect to regulation, the enzyme is completely inhibited by p-chloromercuribenzoate and HgCl(2) in vitro. Thioglycollate, L-cysteine and Cu(2+) also strongly inhibit the enzyme. In terms of biological role, catalyzes the reversible NADPH-dependent reductive amination of L-2-amino-6-oxopimelate, the acyclic form of L-tetrahydrodipicolinate, to generate the meso compound, D,L-2,6-diaminopimelate. Probably plays a role in lysine biosynthesis. Is highly specific for meso-2,6-diaminopimelate as the electron donor, since the following amino acids are inert for the oxidative deamination reaction: DL-2-aminopimelate, D-glutamate, L-glutamate, D-aspartate, L-aspartate, D-alanine, L-alanine, D-valine, L-valine, D-lysine, L-lysine, D-phenylalanine, L-phenylalanine, D-leucine, L-leucine, D-threonine, L-threonine, D-serine, L-serine, D-tryptophan, L-tryptophan, D-cysteine, L-cysteine, D-histidine, L-histidine, D-methionine, D-arginine, D-proline, D-asparagine, D-glutamine, D-isoleucine and D-ornithine. Moreover, exclusively uses NADP as the electron acceptor for the oxidative deamination of meso-DAP; NAD is inert. The sequence is that of Meso-diaminopimelate D-dehydrogenase (ddh) from Ureibacillus thermosphaericus.